The chain runs to 115 residues: Nitrogenase-stabilizing/protective protein NifW (115 aa).

It belongs to the NifW family. As to quaternary structure, homotrimer; associates with NifD.

May protect the nitrogenase Fe-Mo protein from oxidative damage. In Rhodopseudomonas palustris (strain BisB18), this protein is Nitrogenase-stabilizing/protective protein NifW.